The primary structure comprises 221 residues: UPF0328 protein ECU11_2110 (221 aa).

It belongs to the UPF0328 family.

In Encephalitozoon cuniculi (strain GB-M1) (Microsporidian parasite), this protein is UPF0328 protein ECU11_2110.